Consider the following 381-residue polypeptide: Cytochrome b (381 aa).

A run of 4 helical transmembrane segments spans residues 34 to 54 (FGSLLGICLITPILTGVMLAM), 78 to 99 (WMIRNLHANGASFFFICIYLHI), 114 to 134 (WNTGIILLLTLMATAFVGYVL), and 179 to 199 (FFALHFLLPFLIAGISIVHLT). Residues histidine 84 and histidine 98 each coordinate heme b. Residues histidine 183 and histidine 197 each contribute to the heme b site. Histidine 202 contacts a ubiquinone. 4 helical membrane-spanning segments follow: residues 227 to 247 (MKDLLGFTLLSLPFLALAFFT), 289 to 309 (LGGVLALAASVLILFTIPLLH), 321 to 341 (MSQILFWLLVANLFILTWVGS), and 348 to 368 (FIIIGQLASLSYFTILLFLFP).

The protein belongs to the cytochrome b family. As to quaternary structure, the cytochrome bc1 complex contains 11 subunits: 3 respiratory subunits (MT-CYB, CYC1 and UQCRFS1), 2 core proteins (UQCRC1 and UQCRC2) and 6 low-molecular weight proteins (UQCRH/QCR6, UQCRB/QCR7, UQCRQ/QCR8, UQCR10/QCR9, UQCR11/QCR10 and a cleavage product of UQCRFS1). This cytochrome bc1 complex then forms a dimer. The cofactor is heme b.

The protein resides in the mitochondrion inner membrane. Component of the ubiquinol-cytochrome c reductase complex (complex III or cytochrome b-c1 complex) that is part of the mitochondrial respiratory chain. The b-c1 complex mediates electron transfer from ubiquinol to cytochrome c. Contributes to the generation of a proton gradient across the mitochondrial membrane that is then used for ATP synthesis. The protein is Cytochrome b (MT-CYB) of Nothoprocta perdicaria (Chilean tinamou).